The sequence spans 449 residues: Trigger factor (449 aa).

A PPIase FKBP-type domain is found at 173-258 (GDRVTVDFVG…MKKVEWPHLP (86 aa)).

It belongs to the FKBP-type PPIase family. Tig subfamily.

The protein localises to the cytoplasm. It catalyses the reaction [protein]-peptidylproline (omega=180) = [protein]-peptidylproline (omega=0). In terms of biological role, involved in protein export. Acts as a chaperone by maintaining the newly synthesized protein in an open conformation. Functions as a peptidyl-prolyl cis-trans isomerase. This Burkholderia thailandensis (strain ATCC 700388 / DSM 13276 / CCUG 48851 / CIP 106301 / E264) protein is Trigger factor.